The following is a 680-amino-acid chain: DNA-directed RNA polymerase subunit beta' (680 aa).

Positions 69, 71, 87, and 90 each coordinate Zn(2+). The Mg(2+) site is built by Asp489, Asp491, and Asp493.

Belongs to the RNA polymerase beta' chain family. RpoC1 subfamily. In plastids the minimal PEP RNA polymerase catalytic core is composed of four subunits: alpha, beta, beta', and beta''. When a (nuclear-encoded) sigma factor is associated with the core the holoenzyme is formed, which can initiate transcription. It depends on Mg(2+) as a cofactor. The cofactor is Zn(2+).

The protein resides in the plastid. It is found in the chloroplast. The enzyme catalyses RNA(n) + a ribonucleoside 5'-triphosphate = RNA(n+1) + diphosphate. Functionally, DNA-dependent RNA polymerase catalyzes the transcription of DNA into RNA using the four ribonucleoside triphosphates as substrates. The protein is DNA-directed RNA polymerase subunit beta' of Ranunculus macranthus (Large buttercup).